Here is a 162-residue protein sequence, read N- to C-terminus: ATP synthase subunit b 1 (162 aa).

The helical transmembrane segment at Met1 to Trp21 threads the bilayer.

Belongs to the ATPase B chain family. F-type ATPases have 2 components, F(1) - the catalytic core - and F(0) - the membrane proton channel. F(1) has five subunits: alpha(3), beta(3), gamma(1), delta(1), epsilon(1). F(0) has three main subunits: a(1), b(2) and c(10-14). The alpha and beta chains form an alternating ring which encloses part of the gamma chain. F(1) is attached to F(0) by a central stalk formed by the gamma and epsilon chains, while a peripheral stalk is formed by the delta and b chains.

Its subcellular location is the cell inner membrane. Functionally, f(1)F(0) ATP synthase produces ATP from ADP in the presence of a proton or sodium gradient. F-type ATPases consist of two structural domains, F(1) containing the extramembraneous catalytic core and F(0) containing the membrane proton channel, linked together by a central stalk and a peripheral stalk. During catalysis, ATP synthesis in the catalytic domain of F(1) is coupled via a rotary mechanism of the central stalk subunits to proton translocation. Its function is as follows. Component of the F(0) channel, it forms part of the peripheral stalk, linking F(1) to F(0). This is ATP synthase subunit b 1 from Methylorubrum extorquens (strain PA1) (Methylobacterium extorquens).